Consider the following 123-residue polypeptide: Large ribosomal subunit protein bL12 (123 aa).

It belongs to the bacterial ribosomal protein bL12 family. As to quaternary structure, homodimer. Part of the ribosomal stalk of the 50S ribosomal subunit. Forms a multimeric L10(L12)X complex, where L10 forms an elongated spine to which 2 to 4 L12 dimers bind in a sequential fashion. Binds GTP-bound translation factors.

Forms part of the ribosomal stalk which helps the ribosome interact with GTP-bound translation factors. Is thus essential for accurate translation. In Bartonella quintana (strain Toulouse) (Rochalimaea quintana), this protein is Large ribosomal subunit protein bL12.